A 41-amino-acid polypeptide reads, in one-letter code: MQDVKTYLSTAPVLATLWFGLLAGILIEINRFFPDALVLPY.

Residues 7–27 (YLSTAPVLATLWFGLLAGILI) traverse the membrane as a helical segment.

Belongs to the PsaJ family.

Its subcellular location is the plastid. The protein resides in the chloroplast thylakoid membrane. Its function is as follows. May help in the organization of the PsaE and PsaF subunits. This chain is Photosystem I reaction center subunit IX, found in Chara vulgaris (Common stonewort).